The following is a 412-amino-acid chain: MGKQQETILIIGAGIAGLTTSRLLTNNGIPNIVFEASTPDRSQGFAISLQEFGYSALLAALGDLPLSSLIRGVAPDRKIGGSGWIDQALRDNRTGEVLVAPDLTTTKQTIVRANRNALRHWIVDCGEDELDVRYGHKLQRIEGKLGDVTAVFENNAKYKGSLIIAADGVNSTARSQILPNVVPEAIPLIHYHGEFQISHSAFDELIRPHSGHSNILVGVGDRFNTPLSICNITKSQVHLDWSYSRTVKGENDILYCPNVPSEEAKQIPPALLEELDTLSLAEPWKTFLNSESLKAHRVFHWTTRCVYITQDDARHAGEQGVVFVGDSWHAMPIFGGEGGNHALLDGVELANAIITSTESSGRGSWDNVAKNYYGGAWKRSQDAVRRSTQRFFLLHRPATEWKEISEKKKTLA.

The N-terminal stretch at 1-21 (MGKQQETILIIGAGIAGLTTS) is a signal peptide. Glutamate 35 and alanine 46 together coordinate FAD. N-linked (GlcNAc...) asparagine glycosylation is present at asparagine 92. Arginine 119 is a binding site for FAD. Residues asparagine 170 and asparagine 231 are each glycosylated (N-linked (GlcNAc...) asparagine). FAD contacts are provided by aspartate 326 and glycine 339.

Belongs to the paxM FAD-dependent monooxygenase family. FAD serves as cofactor.

Its pathway is secondary metabolite biosynthesis. Functionally, FAD-dependent monooxygenase; part of the gene cluster that mediates the biosynthesis of neosartoricin B, a prenylated anthracenone that probably exhibits T-cell antiproliferative activity, suggestive of a physiological role as an immunosuppressive agent. The non-reducing polyketide synthase nscA probably synthesizes and cyclizes the decaketide backbone. The hydrolase nscB then mediates the product release through hydrolysis followed by spontaneous decarboxylation. The prenyltransferase nscD catalyzes the addition of the dimethylallyl group to the aromatic C5. The FAD-dependent monooxygenase nscC is then responsible for the stereospecific hydroxylation at C2. Neosartoricin B can be converted into two additional compounds neosartoricins C and D. Neosartoricin C is a spirocyclic compound that is cyclized through the attack of C3 hydroxyl on C14, followed by dehydration. On the other hand, neosartoricin D is a further cyclized compound in which attack of C2 on C14 in neosartoricin C results in the formation of the acetal-containing dioxabicyclo-octanone ring. Both of these compounds are novel and possibly represent related metabolites of the gene cluster. This chain is FAD-dependent monooxygenase nscC, found in Trichophyton verrucosum (strain HKI 0517).